Consider the following 432-residue polypeptide: uncharacterized protein (432 aa).

A run of 12 helical transmembrane segments spans residues 35-55, 60-80, 112-132, 144-164, 185-205, 209-229, 242-262, 274-294, 313-333, 359-379, 384-404, and 408-428; these read VARVGAATALAVACVYTVIYL, LPPACFSIFAVFWGALGIATG, VAGMIGTVAAVVIAGSSPLWS, VGLLSVGVAGFCAQATLLGAL, LAVAAAAVVIGWGLAGYLWAA, AVAWLLMLMASPTARSAASLL, AHSITAAGASAILVMGFPVLL, GAVILAVTLTRAPLLVPLSAM, LIAPALVVGGIGAVGMLAAGL, AAAVAIAMLTLTGAAAVAAAL, LLGWVSATVASTLLLLLPMPL, and TVIALLFGPTVGIAIHVAALA.

This sequence to M.tuberculosis Rv3630 and M.bovis Mb3654.

The protein localises to the cell membrane. This is an uncharacterized protein from Mycobacterium tuberculosis (strain CDC 1551 / Oshkosh).